The chain runs to 182 residues: Orotate phosphoribosyltransferase (182 aa).

5-phospho-alpha-D-ribose 1-diphosphate contacts are provided by residues Arg-93, Lys-94, Lys-97, and 119-127 (EDIATTGTS). Residues Thr-123 and Arg-151 each coordinate orotate.

The protein belongs to the purine/pyrimidine phosphoribosyltransferase family. PyrE subfamily. As to quaternary structure, homodimer. Requires Mg(2+) as cofactor.

It carries out the reaction orotidine 5'-phosphate + diphosphate = orotate + 5-phospho-alpha-D-ribose 1-diphosphate. Its pathway is pyrimidine metabolism; UMP biosynthesis via de novo pathway; UMP from orotate: step 1/2. In terms of biological role, catalyzes the transfer of a ribosyl phosphate group from 5-phosphoribose 1-diphosphate to orotate, leading to the formation of orotidine monophosphate (OMP). This is Orotate phosphoribosyltransferase from Haloquadratum walsbyi (strain DSM 16790 / HBSQ001).